Here is a 233-residue protein sequence, read N- to C-terminus: 7-cyano-7-deazaguanine synthase (233 aa).

Residue 7–17 (LSGGLDSAVTS) participates in ATP binding. Zn(2+) is bound by residues cysteine 195, cysteine 206, cysteine 209, and cysteine 212.

It belongs to the QueC family. The cofactor is Zn(2+).

The catalysed reaction is 7-carboxy-7-deazaguanine + NH4(+) + ATP = 7-cyano-7-deazaguanine + ADP + phosphate + H2O + H(+). It functions in the pathway purine metabolism; 7-cyano-7-deazaguanine biosynthesis. Its function is as follows. Catalyzes the ATP-dependent conversion of 7-carboxy-7-deazaguanine (CDG) to 7-cyano-7-deazaguanine (preQ(0)). In Methanococcus maripaludis (strain C7 / ATCC BAA-1331), this protein is 7-cyano-7-deazaguanine synthase.